Reading from the N-terminus, the 370-residue chain is Aminomethyltransferase (370 aa).

The protein belongs to the GcvT family. In terms of assembly, the glycine cleavage system is composed of four proteins: P, T, L and H.

The catalysed reaction is N(6)-[(R)-S(8)-aminomethyldihydrolipoyl]-L-lysyl-[protein] + (6S)-5,6,7,8-tetrahydrofolate = N(6)-[(R)-dihydrolipoyl]-L-lysyl-[protein] + (6R)-5,10-methylene-5,6,7,8-tetrahydrofolate + NH4(+). Functionally, the glycine cleavage system catalyzes the degradation of glycine. This is Aminomethyltransferase from Leptospira biflexa serovar Patoc (strain Patoc 1 / Ames).